Reading from the N-terminus, the 299-residue chain is HTH-type transcriptional regulator CrgA (299 aa).

Residues 1 to 60 (MKTNSEELTVFVQVVESGSFSRAAEQLAMANSAVSRIVKRLEEKLGVNLLNRTTRQLSLT) form the HTH lysR-type domain. The segment at residues 20–39 (FSRAAEQLAMANSAVSRIVK) is a DNA-binding region (H-T-H motif).

This sequence belongs to the LysR transcriptional regulatory family. As to quaternary structure, forms oligomers. Forms an octomeric ring-like structure in solution. May form hexadecamers when bound to target DNA.

Activation and repression activities are enhanced by the addition of alpha-methylene-gamma-butyrolactone (MBL), an inducer of NADPH:quinone oxidoreductase. Regulatory protein that activates transcription of mdaB, encoding a NADPH:quinone oxidoreductase, and represses its own transcription. Under the same experimental conditions, no regulation of transcription of pilus and capsule genes is detected. In Neisseria meningitidis serogroup B (strain ATCC BAA-335 / MC58), this protein is HTH-type transcriptional regulator CrgA.